The chain runs to 91 residues: Small ribosomal subunit protein bS20 (91 aa).

A compositionally biased stretch (basic and acidic residues) spans 1-18 (MPLHKSAEKRLRQSERRN). Residues 1 to 25 (MPLHKSAEKRLRQSERRNARNRARK) are disordered.

Belongs to the bacterial ribosomal protein bS20 family.

Functionally, binds directly to 16S ribosomal RNA. This chain is Small ribosomal subunit protein bS20, found in Chlorobium luteolum (strain DSM 273 / BCRC 81028 / 2530) (Pelodictyon luteolum).